Reading from the N-terminus, the 187-residue chain is UPF0340 protein SGO_0411 (187 aa).

The protein belongs to the UPF0340 family.

The protein is UPF0340 protein SGO_0411 of Streptococcus gordonii (strain Challis / ATCC 35105 / BCRC 15272 / CH1 / DL1 / V288).